Reading from the N-terminus, the 133-residue chain is Large ribosomal subunit protein bL20 (133 aa).

The protein belongs to the bacterial ribosomal protein bL20 family.

Its function is as follows. Binds directly to 23S ribosomal RNA and is necessary for the in vitro assembly process of the 50S ribosomal subunit. It is not involved in the protein synthesizing functions of that subunit. This Bartonella henselae (strain ATCC 49882 / DSM 28221 / CCUG 30454 / Houston 1) (Rochalimaea henselae) protein is Large ribosomal subunit protein bL20.